We begin with the raw amino-acid sequence, 238 residues long: Small ribosomal subunit protein uS3 (238 aa).

Residues 39 to 109 (IRTFINQQLA…TIKVNVVEVN (71 aa)) form the KH type-2 domain. The tract at residues 215–238 (EAVPREATRRSPQRRLPQFENRSN) is disordered.

Belongs to the universal ribosomal protein uS3 family. In terms of assembly, part of the 30S ribosomal subunit. Forms a tight complex with proteins S10 and S14.

In terms of biological role, binds the lower part of the 30S subunit head. Binds mRNA in the 70S ribosome, positioning it for translation. The polypeptide is Small ribosomal subunit protein uS3 (Thermosynechococcus vestitus (strain NIES-2133 / IAM M-273 / BP-1)).